A 547-amino-acid polypeptide reads, in one-letter code: Chaperonin GroEL 1 (547 aa).

Residues Thr30–Pro33, Lys51, Asp87–Thr91, Gly415, and Asp496 each bind ATP.

It belongs to the chaperonin (HSP60) family. Forms a cylinder of 14 subunits composed of two heptameric rings stacked back-to-back. Interacts with the co-chaperonin GroES.

The protein localises to the cytoplasm. The catalysed reaction is ATP + H2O + a folded polypeptide = ADP + phosphate + an unfolded polypeptide.. Functionally, together with its co-chaperonin GroES, plays an essential role in assisting protein folding. The GroEL-GroES system forms a nano-cage that allows encapsulation of the non-native substrate proteins and provides a physical environment optimized to promote and accelerate protein folding. The sequence is that of Chaperonin GroEL 1 from Rhodopseudomonas palustris (strain BisB18).